The chain runs to 368 residues: SH3 domain-containing protein 2 (368 aa).

Coiled-coil stretches lie at residues 1-21 (MDAIRKQASRLREQVARQQQA) and 146-210 (LEDA…LGKE). The BAR domain maps to 1-264 (MDAIRKQASR…MVSERQRIEA (264 aa)). The tract at residues 258-281 (ERQRIEAPSTPSSADSMPPPPSYE) is disordered. The region spanning 299–358 (MGYFLGEVLFPYHGVTDVELSLSTGEYVVVRKVTGSGWAEGECKGKAGWFPYGYIERRER) is the SH3 domain.

Homodimer. Interacts with FREE1. Interacts (via SH3 domain) with ATG8E and ATG8F. Component of a phosphoinositide 3-kinase (PI3K) complex containing ATG6, SH3P2 and FREE1. Binds to SH3P3 and DRP1A. Forms a complex made of SH3P2 and DRP1A and triggers its accumulation at the cell plate. As to expression, highly expressed in seedlings. Detected in flowers, leaves and stems.

The protein localises to the cytoplasm. Its subcellular location is the cytoplasmic vesicle. It localises to the clathrin-coated vesicle. The protein resides in the cell membrane. It is found in the late endosome. The protein localises to the autophagosome membrane. Functionally, regulator for autophaosome formation and/or maturation. Binds phosphatidylinositol-phosphate; highest affinity for vesicles containing PtdIns(3,4,5)P(3), followed by those containing PtdIns(4,5)P(2) and PtdIns(3,4)P(2), with minimal binding to phosphatidylinositol monophosphates, including PtdIns(3)P. Together with DRP1A, converts the fused vesicles to tubular structures at the cell plate during cytokinesis. This chain is SH3 domain-containing protein 2, found in Arabidopsis thaliana (Mouse-ear cress).